The primary structure comprises 212 residues: Methylthioribulose-1-phosphate dehydratase (212 aa).

The Zn(2+) site is built by His97 and His99.

It belongs to the aldolase class II family. MtnB subfamily. As to quaternary structure, homotetramer. Requires Zn(2+) as cofactor.

It catalyses the reaction 5-(methylsulfanyl)-D-ribulose 1-phosphate = 5-methylsulfanyl-2,3-dioxopentyl phosphate + H2O. It functions in the pathway amino-acid biosynthesis; L-methionine biosynthesis via salvage pathway; L-methionine from S-methyl-5-thio-alpha-D-ribose 1-phosphate: step 2/6. Its function is as follows. Catalyzes the dehydration of methylthioribulose-1-phosphate (MTRu-1-P) into 2,3-diketo-5-methylthiopentyl-1-phosphate (DK-MTP-1-P). In Bacillus cereus (strain AH187), this protein is Methylthioribulose-1-phosphate dehydratase.